The primary structure comprises 579 residues: YTH domain-containing family protein 2 (579 aa).

Positions 1–45 are disordered; sequence MSASSLLEQRPKGQGNKVQNGSVHQKDGLNDDDFEPYLSPQARPN. Residue serine 2 is modified to N-acetylserine. A phosphoserine mark is found at serine 2, serine 4, serine 5, serine 22, serine 39, and serine 196. Residues 2–384 are localization to mRNA processing bodies (P-bodies); that stretch reads SASSLLEQRP…QAGSGSTPSE (383 aa). A disordered region spans residues 247–387; the sequence is AKQQPKLKTK…SGSTPSEPHP (141 aa). Residues 291 to 316 are compositionally biased toward polar residues; that stretch reads ALVQNIGQPTQGSPQPVGQQANNSPP. A compositionally biased stretch (low complexity) spans 337-349; sequence AQLSVQQQAAQPT. Serine 359 bears the Phosphoserine mark. Residues 359–371 show a composition bias toward gly residues; sequence SGFGHNGVDGNGV. Over residues 372 to 383 the composition is skewed to polar residues; sequence GQSQAGSGSTPS. The interval 385–579 is interaction with m6A-containing mRNAs; it reads PHPVLEKLRS…VKKERQGRGK (195 aa). A Phosphoserine modification is found at serine 394. In terms of domain architecture, YTH spans 410–544; it reads GRVFIIKSYS…EKAKQVLKII (135 aa). RNA-binding positions include 416–418, aspartate 422, 432–433, asparagine 462, tryptophan 486, and tryptophan 491; these read KSY and WC.

This sequence belongs to the YTHDF family. YTHDF2 subfamily. As to quaternary structure, interacts with CNOT1; interaction is direct and promotes recruitment of the CCR4-NOT complex. Interacts with YTHDF3. Interacts with RIDA/HRSP12; interaction leads to recruitment of the ribonuclease P/MRP complex. Ubiquitinated by the SCF(SKP2) complex, leading to its degradation. Highly expressed in induced pluripotent stem cells (iPSCs) and down-regulated during neural differentiation.

Its subcellular location is the cytoplasm. The protein resides in the cytosol. The protein localises to the P-body. It localises to the stress granule. It is found in the nucleus. Specifically recognizes and binds N6-methyladenosine (m6A)-containing RNAs, and regulates their stability. M6A is a modification present at internal sites of mRNAs and some non-coding RNAs and plays a role in mRNA stability and processing. Acts as a regulator of mRNA stability by promoting degradation of m6A-containing mRNAs via interaction with the CCR4-NOT and ribonuclease P/MRP complexes, depending on the context. The YTHDF paralogs (YTHDF1, YTHDF2 and YTHDF3) share m6A-containing mRNAs targets and act redundantly to mediate mRNA degradation and cellular differentiation. M6A-containing mRNAs containing a binding site for RIDA/HRSP12 (5'-GGUUC-3') are preferentially degraded by endoribonucleolytic cleavage: cooperative binding of RIDA/HRSP12 and YTHDF2 to transcripts leads to recruitment of the ribonuclease P/MRP complex. Other m6A-containing mRNAs undergo deadenylation via direct interaction between YTHDF2 and CNOT1, leading to recruitment of the CCR4-NOT and subsequent deadenylation of m6A-containing mRNAs. Required maternally to regulate oocyte maturation: probably acts by binding to m6A-containing mRNAs, thereby regulating maternal transcript dosage during oocyte maturation, which is essential for the competence of oocytes to sustain early zygotic development. Also required during spermatogenesis: regulates spermagonial adhesion by promoting degradation of m6A-containing transcripts coding for matrix metallopeptidases. Also involved in hematopoietic stem cells specification by binding to m6A-containing mRNAs, leading to promote their degradation. Also acts as a regulator of neural development by promoting m6A-dependent degradation of neural development-related mRNA targets. Inhibits neural specification of induced pluripotent stem cells by binding to methylated neural-specific mRNAs and promoting their degradation, thereby restraining neural differentiation. Regulates circadian regulation of hepatic lipid metabolism: acts by promoting m6A-dependent degradation of PPARA transcripts. Regulates the innate immune response to infection by inhibiting the type I interferon response: acts by binding to m6A-containing IFNB transcripts and promoting their degradation. May also act as a promoter of cap-independent mRNA translation following heat shock stress: upon stress, relocalizes to the nucleus and specifically binds mRNAs with some m6A methylation mark at their 5'-UTR, protecting demethylation of mRNAs by FTO, thereby promoting cap-independent mRNA translation. Regulates mitotic entry by promoting the phase-specific m6A-dependent degradation of WEE1 transcripts. Promotes formation of phase-separated membraneless compartments, such as P-bodies or stress granules, by undergoing liquid-liquid phase separation upon binding to mRNAs containing multiple m6A-modified residues: polymethylated mRNAs act as a multivalent scaffold for the binding of YTHDF proteins, juxtaposing their disordered regions and thereby leading to phase separation. The resulting mRNA-YTHDF complexes then partition into different endogenous phase-separated membraneless compartments, such as P-bodies, stress granules or neuronal RNA granules. May also recognize and bind RNAs modified by C5-methylcytosine (m5C) and act as a regulator of rRNA processing. In terms of biological role, (Microbial infection) Promotes viral gene expression and replication of polyomavirus SV40: acts by binding to N6-methyladenosine (m6A)-containing viral RNAs. Its function is as follows. (Microbial infection) Promotes viral gene expression and virion production of kaposis sarcoma-associated herpesvirus (KSHV) at some stage of the KSHV life cycle (in iSLK.219 and iSLK.BAC16 cells). Acts by binding to N6-methyladenosine (m6A)-containing viral RNAs. The protein is YTH domain-containing family protein 2 of Homo sapiens (Human).